The following is a 457-amino-acid chain: Cysteine--tRNA ligase (457 aa).

Position 28 (Cys-28) interacts with Zn(2+). Residues Ile-30–His-40 carry the 'HIGH' region motif. Zn(2+) contacts are provided by Cys-209, His-234, and Glu-238. Residues Lys-266–Ser-270 carry the 'KMSKS' region motif. Lys-269 provides a ligand contact to ATP.

Belongs to the class-I aminoacyl-tRNA synthetase family. As to quaternary structure, monomer. It depends on Zn(2+) as a cofactor.

It is found in the cytoplasm. It carries out the reaction tRNA(Cys) + L-cysteine + ATP = L-cysteinyl-tRNA(Cys) + AMP + diphosphate. The chain is Cysteine--tRNA ligase from Sodalis glossinidius (strain morsitans).